A 681-amino-acid chain; its full sequence is Envelope glycoprotein (681 aa).

Positions 1–18 (MKTTCFLISLILIQGTKN) are cleaved as a signal peptide. Residues 19–648 (LPILEIASNN…GLGGKWWTSD (630 aa)) are Extracellular-facing. 5 disulfide bridges follow: C37/C610, C92/C119, C211/C226, C512/C557, and C602/C609. Positions 38–188 (SGTLQKTEDV…FSRQGQGYRH (151 aa)) are receptor-binding. N-linked (GlcNAc...) asparagine; by host glycosylation is found at N94, N171, N190, N202, N207, N219, N223, and N255. Positions 223–427 (NQTCAPSKIP…PPTPSSTAQH (205 aa)) are disordered. Polar residues-rich tracts occupy residues 244 to 259 (LTST…TTDP), 281 to 290 (TSDAVTKQGL), and 308 to 318 (GGNNTNHSQDA). The segment at 277–455 (EPHTTSDAVT…PFLDGLINAP (179 aa)) is mucin-like region. N-linked (GlcNAc...) asparagine; by host glycans are attached at residues N310, N313, N325, N326, N337, N344, N345, N350, N360, N408, and N487. The segment covering 337–347 (NTTTISTNNTS) has biased composition (low complexity). Residues 348–414 (KHNFSTLSAP…TAPNTTNEHF (67 aa)) show a composition bias toward polar residues. The interval 529–549 (GLSWIPFFGPGIEGLYTAVLI) is fusion peptide. N564 carries N-linked (GlcNAc...) asparagine; by host glycosylation. N619 carries an N-linked (GlcNAc...) asparagine; by host glycan. A helical membrane pass occupies residues 649 to 669 (WGVLTNLGILLLLSIAVLIAL). Residues 670–681 (SCICRIFTKYIG) are Cytoplasmic-facing. 2 S-palmitoyl cysteine; by host lipidation sites follow: C671 and C673.

Belongs to the filoviruses glycoprotein family. In terms of assembly, homotrimer; each monomer consists of a GP1 and a GP2 subunit linked by disulfide bonds. The resulting peplomers (GP1,2) protrude from the virus surface as spikes. GP1,2 interacts with human CD209 and CLEC4M (collectively referred to as DC-SIGN(R)). Asialoglycoprotein receptor (ASGP-R) may be a liver-specific receptor for GP1,2. Members of the Tyro3 receptor tyrosine kinase family may be cell entry factors interacting with GP1,2. N-glycosylated. In terms of processing, O-glycosylated in the mucin-like region. Post-translationally, specific enzymatic cleavages in vivo yield mature proteins. The precursor is processed into GP1 and GP2 by host cell furin in the trans Golgi, and maybe by other host proteases, to yield the mature GP1 and GP2 proteins. The cleavage site corresponds to the furin optimal cleavage sequence [KR]-X-[KR]-R. GP1 is phosphorylated on serine residues between residues 260 and 273.

It is found in the virion membrane. The protein resides in the host cell membrane. Functionally, GP1 is responsible for binding to the receptor(s) on target cells. Interacts with CD209/DC-SIGN and CLEC4M/DC-SIGNR which act as cofactors for virus entry into the host cell. Binding to CD209 and CLEC4M, which are respectively found on dendritic cells (DCs), and on endothelial cells of liver sinusoids and lymph node sinuses, facilitate infection of macrophages and endothelial cells. These interactions not only facilitate virus cell entry, but also allow capture of viral particles by DCs and subsequent transmission to susceptible cells without DCs infection (trans infection). In terms of biological role, GP2 acts as a class I viral fusion protein. Under the current model, the protein has at least 3 conformational states: pre-fusion native state, pre-hairpin intermediate state, and post-fusion hairpin state. During viral and target cell membrane fusion, the coiled coil regions (heptad repeats) assume a trimer-of-hairpins structure, positioning the fusion peptide in close proximity to the C-terminal region of the ectodomain. The formation of this structure appears to drive apposition and subsequent fusion of viral and target cell membranes. Responsible for penetration of the virus into the cell cytoplasm by mediating the fusion of the membrane of the endocytosed virus particle with the endosomal membrane. Low pH in endosomes induces an irreversible conformational change in GP2, releasing the fusion hydrophobic peptide. The protein is Envelope glycoprotein (GP) of Lake Victoria marburgvirus (strain Musoke-80) (MARV).